A 181-amino-acid polypeptide reads, in one-letter code: Oligoribonuclease (181 aa).

The 164-residue stretch at 8 to 171 (LIWVDLEMTG…DDIRESIAEL (164 aa)) folds into the Exonuclease domain. Residue Tyr-129 is part of the active site.

Belongs to the oligoribonuclease family.

It localises to the cytoplasm. Its function is as follows. 3'-to-5' exoribonuclease specific for small oligoribonucleotides. The polypeptide is Oligoribonuclease (Aliivibrio fischeri (strain ATCC 700601 / ES114) (Vibrio fischeri)).